A 138-amino-acid polypeptide reads, in one-letter code: Putative pre-16S rRNA nuclease (138 aa).

The protein belongs to the YqgF nuclease family.

It localises to the cytoplasm. Could be a nuclease involved in processing of the 5'-end of pre-16S rRNA. The sequence is that of Putative pre-16S rRNA nuclease from Caldicellulosiruptor bescii (strain ATCC BAA-1888 / DSM 6725 / KCTC 15123 / Z-1320) (Anaerocellum thermophilum).